The primary structure comprises 386 residues: Cytochrome b (386 aa).

4 consecutive transmembrane segments (helical) span residues 32-52, 76-98, 113-133, and 179-199; these read FGSL…TLAM, WLIR…LHVG, TWII…LGYV, and FFAL…MHLI. Residues H82 and H96 each contribute to the heme b site. Heme b-binding residues include H183 and H197. A ubiquinone is bound at residue H202. 4 helical membrane-spanning segments follow: residues 226–246, 290–310, 322–342, and 349–369; these read YIFK…LFVF, LLGV…PITD, LSKV…QLGA, and FIEF…VIMP.

This sequence belongs to the cytochrome b family. As to quaternary structure, fungal cytochrome b-c1 complex contains 10 subunits; 3 respiratory subunits, 2 core proteins and 5 low-molecular weight proteins. Cytochrome b-c1 complex is a homodimer. It depends on heme b as a cofactor.

It is found in the mitochondrion inner membrane. Its function is as follows. Component of the ubiquinol-cytochrome c reductase complex (complex III or cytochrome b-c1 complex) that is part of the mitochondrial respiratory chain. The b-c1 complex mediates electron transfer from ubiquinol to cytochrome c. Contributes to the generation of a proton gradient across the mitochondrial membrane that is then used for ATP synthesis. This Talaromyces marneffei (Penicillium marneffei) protein is Cytochrome b (cob).